The following is a 635-amino-acid chain: Probable monoacyl phosphatidylinositol tetramannoside-binding protein LpqW (635 aa).

A signal peptide spans 1–26 (MGVPSPVRRVCVTVGALVALACMVLA). Disordered stretches follow at residues 32–52 (PPPAPQSTDTPRSTPPPPRRP), 389–412 (NTSVSPAPSVPDSTTTSVSTGPPE), and 511–551 (NAPT…LVKA). 2 stretches are compositionally biased toward low complexity: residues 390–411 (TSVSPAPSVPDSTTTSVSTGPP) and 511–531 (NAPTTAPSAPIGPTPSAAPDT).

Belongs to the bacterial solute-binding protein 5 family.

It participates in phospholipid metabolism; phosphatidylinositol metabolism. In terms of biological role, may directly or indirectly regulate the accessibility of the key branch point intermediate, monoacyl phosphatidylinositol tetramannoside (AcPIM4), to the elongating alpha-1,6 mannosyltransferases which could regulate the lipoarabinomannans (LAMs) biosynthesis. The chain is Probable monoacyl phosphatidylinositol tetramannoside-binding protein LpqW (lpqW) from Mycobacterium tuberculosis (strain CDC 1551 / Oshkosh).